A 216-amino-acid chain; its full sequence is Glycerol-3-phosphate acyltransferase 3 (216 aa).

Transmembrane regions (helical) follow at residues 6-26 (LLLVVIVSYILGSIPFGYLVS), 58-78 (LVASLDVIKGASAVAFAGLVI), 92-112 (LLFAQVLAGLAAVAGHIWPVF), 125-145 (FGGMIALCPVAAIFGGEVLII), and 158-178 (ITGVVGAYALLVPLTLISGFP).

It belongs to the PlsY family. In terms of assembly, probably interacts with PlsX.

It localises to the cell membrane. It carries out the reaction an acyl phosphate + sn-glycerol 3-phosphate = a 1-acyl-sn-glycero-3-phosphate + phosphate. It participates in lipid metabolism; phospholipid metabolism. In terms of biological role, catalyzes the transfer of an acyl group from acyl-phosphate (acyl-PO(4)) to glycerol-3-phosphate (G3P) to form lysophosphatidic acid (LPA). This enzyme utilizes acyl-phosphate as fatty acyl donor, but not acyl-CoA or acyl-ACP. In Dehalococcoides mccartyi (strain CBDB1), this protein is Glycerol-3-phosphate acyltransferase 3.